We begin with the raw amino-acid sequence, 222 residues long: Deoxyribose-phosphate aldolase (222 aa).

The active-site Proton donor/acceptor is aspartate 93. Lysine 156 acts as the Schiff-base intermediate with acetaldehyde in catalysis. Residue lysine 186 is the Proton donor/acceptor of the active site.

Belongs to the DeoC/FbaB aldolase family. DeoC type 1 subfamily.

The protein resides in the cytoplasm. It carries out the reaction 2-deoxy-D-ribose 5-phosphate = D-glyceraldehyde 3-phosphate + acetaldehyde. It functions in the pathway carbohydrate degradation; 2-deoxy-D-ribose 1-phosphate degradation; D-glyceraldehyde 3-phosphate and acetaldehyde from 2-deoxy-alpha-D-ribose 1-phosphate: step 2/2. Catalyzes a reversible aldol reaction between acetaldehyde and D-glyceraldehyde 3-phosphate to generate 2-deoxy-D-ribose 5-phosphate. The protein is Deoxyribose-phosphate aldolase of Corynebacterium glutamicum (strain ATCC 13032 / DSM 20300 / JCM 1318 / BCRC 11384 / CCUG 27702 / LMG 3730 / NBRC 12168 / NCIMB 10025 / NRRL B-2784 / 534).